A 267-amino-acid chain; its full sequence is 3-methyl-2-oxobutanoate hydroxymethyltransferase (267 aa).

Mg(2+) contacts are provided by aspartate 45 and aspartate 84. Residues 45-46 (DS), aspartate 84, and lysine 113 contribute to the 3-methyl-2-oxobutanoate site. Glutamate 115 contacts Mg(2+). Residue glutamate 182 is the Proton acceptor of the active site.

Belongs to the PanB family. In terms of assembly, homodecamer; pentamer of dimers. The cofactor is Mg(2+).

The protein resides in the cytoplasm. The catalysed reaction is 3-methyl-2-oxobutanoate + (6R)-5,10-methylene-5,6,7,8-tetrahydrofolate + H2O = 2-dehydropantoate + (6S)-5,6,7,8-tetrahydrofolate. It functions in the pathway cofactor biosynthesis; coenzyme A biosynthesis. In terms of biological role, catalyzes the reversible reaction in which hydroxymethyl group from 5,10-methylenetetrahydrofolate is transferred onto alpha-ketoisovalerate to form ketopantoate. This chain is 3-methyl-2-oxobutanoate hydroxymethyltransferase, found in Saccharolobus islandicus (strain Y.N.15.51 / Yellowstone #2) (Sulfolobus islandicus).